A 1056-amino-acid polypeptide reads, in one-letter code: ATP-dependent helicase wrn-1 (1056 aa).

A disordered region spans residues 1 to 102 (MISDDDDLPS…SSSDDSDQGD (102 aa)). 2 repeat units span residues 17–26 (NEELPETEPE) and 28–37 (NDELPETEPE). The 2 X 10 AA repeats of N-[ED]-E-L-P-E-T-E-P-E stretch occupies residues 17–37 (NEELPETEPEDNDELPETEPE). The segment covering 19–38 (ELPETEPEDNDELPETEPES) has biased composition (acidic residues). The span at 43–53 (PTVTSNKTENQ) shows a compositional bias: polar residues. Residues 54–63 (VADEDYDSFD) are compositionally biased toward acidic residues. A Helicase ATP-binding domain is found at 236–406 (VRNVLGGKDQ…IANLRLRKPL (171 aa)). Residue 249–256 (MSTGYGKS) coordinates ATP. Residues 348-351 (DEAH) carry the DEAH box motif. One can recognise a Helicase C-terminal domain in the interval 427-583 (MAEDLGLFMK…NLTMMLRQLE (157 aa)). Residues Cys591, Cys614, Cys615, and Cys618 each contribute to the Zn(2+) site. The segment at 749–771 (KEKAAPSTVPGASRSQSTKSSTE) is disordered. A compositionally biased stretch (polar residues) spans 761 to 771 (SRSQSTKSSTE). The HRDC domain occupies 806–886 (PEKIDQLRSR…VQFSKETGIA (81 aa)). A disordered region spans residues 1018–1056 (QEKPDIQSMPSTSNPSTIKTVPSTPSSSLRAPPLKKFKL). Polar residues predominate over residues 1025-1046 (SMPSTSNPSTIKTVPSTPSSSL).

The protein belongs to the helicase family. RecQ subfamily. Zn(2+) serves as cofactor.

It is found in the nucleus. It catalyses the reaction Couples ATP hydrolysis with the unwinding of duplex DNA by translocating in the 3'-5' direction.. It carries out the reaction ATP + H2O = ADP + phosphate + H(+). Its function is as follows. Essential for the formation of DNA replication focal centers; stably associates with foci elements generating binding sites for RP-A. Exhibits a magnesium-dependent ATP-dependent 3'-5' DNA-helicase activity. May be involved in the control of genomic stability. The chain is ATP-dependent helicase wrn-1 (wrn-1) from Caenorhabditis elegans.